The chain runs to 636 residues: DNA-directed RNA polymerase subunit gamma (636 aa).

Positions 71, 73, 86, and 89 each coordinate Zn(2+). Residues Asp-467, Asp-469, and Asp-471 each contribute to the Mg(2+) site.

Belongs to the RNA polymerase beta' chain family. RpoC1 subfamily. As to quaternary structure, in cyanobacteria the RNAP catalytic core is composed of 2 alpha, 1 beta, 1 beta', 1 gamma and 1 omega subunit. When a sigma factor is associated with the core the holoenzyme is formed, which can initiate transcription. It depends on Mg(2+) as a cofactor. Zn(2+) is required as a cofactor.

The enzyme catalyses RNA(n) + a ribonucleoside 5'-triphosphate = RNA(n+1) + diphosphate. Functionally, DNA-dependent RNA polymerase catalyzes the transcription of DNA into RNA using the four ribonucleoside triphosphates as substrates. This chain is DNA-directed RNA polymerase subunit gamma, found in Picosynechococcus sp. (strain ATCC 27264 / PCC 7002 / PR-6) (Agmenellum quadruplicatum).